The chain runs to 357 residues: NADH-quinone oxidoreductase subunit H (357 aa).

Transmembrane regions (helical) follow at residues 20–40 (WLVV…ILCV), 92–112 (ILFI…WAVV), 127–147 (LLYV…AGWA), 165–185 (VSYE…SGSL), 206–226 (FLSW…ISAV), 268–288 (ILLS…PIDI), 294–314 (IPGW…FIWF), and 329–349 (LGWK…AIWM).

It belongs to the complex I subunit 1 family. In terms of assembly, NDH-1 is composed of 14 different subunits. Subunits NuoA, H, J, K, L, M, N constitute the membrane sector of the complex.

It is found in the cell inner membrane. The enzyme catalyses a quinone + NADH + 5 H(+)(in) = a quinol + NAD(+) + 4 H(+)(out). Its function is as follows. NDH-1 shuttles electrons from NADH, via FMN and iron-sulfur (Fe-S) centers, to quinones in the respiratory chain. The immediate electron acceptor for the enzyme in this species is believed to be ubiquinone. Couples the redox reaction to proton translocation (for every two electrons transferred, four hydrogen ions are translocated across the cytoplasmic membrane), and thus conserves the redox energy in a proton gradient. This subunit may bind ubiquinone. The chain is NADH-quinone oxidoreductase subunit H from Bordetella avium (strain 197N).